The sequence spans 63 residues: Putative antitoxin AF_1084 (63 aa).

It belongs to the UPF0165 family.

Possibly the antitoxin component of a type II toxin-antitoxin (TA) system. This Archaeoglobus fulgidus (strain ATCC 49558 / DSM 4304 / JCM 9628 / NBRC 100126 / VC-16) protein is Putative antitoxin AF_1084.